We begin with the raw amino-acid sequence, 330 residues long: o-succinylbenzoate synthase (330 aa).

K130 functions as the Proton donor in the catalytic mechanism. Positions 155, 184, and 206 each coordinate Mg(2+). K228 serves as the catalytic Proton acceptor.

It belongs to the mandelate racemase/muconate lactonizing enzyme family. MenC type 1 subfamily. In terms of assembly, monomer. The cofactor is a divalent metal cation.

The enzyme catalyses (1R,6R)-6-hydroxy-2-succinyl-cyclohexa-2,4-diene-1-carboxylate = 2-succinylbenzoate + H2O. The protein operates within quinol/quinone metabolism; 1,4-dihydroxy-2-naphthoate biosynthesis; 1,4-dihydroxy-2-naphthoate from chorismate: step 4/7. It functions in the pathway cofactor biosynthesis; phylloquinone biosynthesis. In terms of biological role, converts 2-succinyl-6-hydroxy-2,4-cyclohexadiene-1-carboxylate (SHCHC) to 2-succinylbenzoate (OSB). Does not show N-succinylamino acid racemase (NSAR) activity with N-succinyl-L-phenylglycine as substrate. In Bdellovibrio bacteriovorus (strain ATCC 15356 / DSM 50701 / NCIMB 9529 / HD100), this protein is o-succinylbenzoate synthase.